The sequence spans 288 residues: Glucose-1-phosphate thymidylyltransferase (288 aa).

Residue Gly-8 coordinates dTDP-alpha-D-glucose. DTTP is bound by residues Gly-8, Gly-11, Thr-12, Arg-13, Lys-23, Gln-24, Gln-80, Gly-85, and Asp-108. DTDP-alpha-D-glucose-binding residues include Lys-23, Gln-24, Gln-80, Gly-85, Asp-108, Asn-109, Gly-143, Glu-158, Lys-159, Val-169, and Asp-222. Residue Asp-108 coordinates Mg(2+). Asp-222 lines the Mg(2+) pocket.

This sequence belongs to the glucose-1-phosphate thymidylyltransferase family. Mg(2+) is required as a cofactor.

The catalysed reaction is dTTP + alpha-D-glucose 1-phosphate + H(+) = dTDP-alpha-D-glucose + diphosphate. It participates in carbohydrate biosynthesis; dTDP-L-rhamnose biosynthesis. Functionally, catalyzes the conversion of glucose-1-phosphate and dTTP to dTDP-glucose and pyrophosphate. Involved in the biosynthesis of the dTDP-L-rhamnose which is a component of the critical linker, D-N-acetylglucosamine-L-rhamnose disaccharide, which connects the galactan region of arabinogalactan to peptidoglycan via a phosphodiester linkage. This chain is Glucose-1-phosphate thymidylyltransferase (rmlA), found in Mycobacterium tuberculosis (strain CDC 1551 / Oshkosh).